Here is a 208-residue protein sequence, read N- to C-terminus: Pyridoxine/pyridoxamine 5'-phosphate oxidase (208 aa).

Residues 55-60 (RMVLLK), 70-71 (YT), Lys76, Lys77, and Gln99 each bind FMN. Lys60 is a binding site for substrate. Residues Tyr117, Arg121, and Ser125 each contribute to the substrate site. Residues 134 to 135 (QS) and Trp179 contribute to the FMN site. 185–187 (RLH) lines the substrate pocket. Arg189 contacts FMN.

Belongs to the pyridoxamine 5'-phosphate oxidase family. Homodimer. The cofactor is FMN.

The catalysed reaction is pyridoxamine 5'-phosphate + O2 + H2O = pyridoxal 5'-phosphate + H2O2 + NH4(+). It catalyses the reaction pyridoxine 5'-phosphate + O2 = pyridoxal 5'-phosphate + H2O2. It functions in the pathway cofactor metabolism; pyridoxal 5'-phosphate salvage; pyridoxal 5'-phosphate from pyridoxamine 5'-phosphate: step 1/1. It participates in cofactor metabolism; pyridoxal 5'-phosphate salvage; pyridoxal 5'-phosphate from pyridoxine 5'-phosphate: step 1/1. Functionally, catalyzes the oxidation of either pyridoxine 5'-phosphate (PNP) or pyridoxamine 5'-phosphate (PMP) into pyridoxal 5'-phosphate (PLP). This is Pyridoxine/pyridoxamine 5'-phosphate oxidase from Brucella ovis (strain ATCC 25840 / 63/290 / NCTC 10512).